A 376-amino-acid polypeptide reads, in one-letter code: WD repeat-containing protein 86 (376 aa).

8 WD repeats span residues 13-52, 55-94, 95-132, 135-188, 191-232, 234-272, 274-310, and 313-350; these read DHRG…CCAL, GHES…QVYR, GHTS…MSRE, GHRN…CHQT, GHTG…RVFR, HRGS…RTFT, HRRN…LRRV, and GHTF…GAPR.

The sequence is that of WD repeat-containing protein 86 (WDR86) from Homo sapiens (Human).